We begin with the raw amino-acid sequence, 20 residues long: MGQFFAYATVITVKENDHVA.

This is an uncharacterized protein from Escherichia coli (strain K12).